A 156-amino-acid chain; its full sequence is Ribosomal RNA large subunit methyltransferase H (156 aa).

Residues Leu73, Gly104, and Leu123–Leu128 contribute to the S-adenosyl-L-methionine site.

The protein belongs to the RNA methyltransferase RlmH family. In terms of assembly, homodimer.

The protein resides in the cytoplasm. It carries out the reaction pseudouridine(1915) in 23S rRNA + S-adenosyl-L-methionine = N(3)-methylpseudouridine(1915) in 23S rRNA + S-adenosyl-L-homocysteine + H(+). Specifically methylates the pseudouridine at position 1915 (m3Psi1915) in 23S rRNA. The sequence is that of Ribosomal RNA large subunit methyltransferase H from Thiobacillus denitrificans (strain ATCC 25259 / T1).